We begin with the raw amino-acid sequence, 354 residues long: Homer protein homolog 2 (354 aa).

In terms of domain architecture, WH1 spans 1 to 110; that stretch reads MGEQPIFTTR…EKFQEVKEAA (110 aa). The stretch at 92–122 forms a coiled coil; sequence SEQQLTKFAEKFQEVKEAAKIAKDKTQEKIE. Positions 112–122 are enriched in basic and acidic residues; the sequence is IAKDKTQEKIE. Residues 112 to 166 are disordered; that stretch reads IAKDKTQEKIETSSNHSQESGRETPSSTQASSVNGTDDEKASHAGPANTHLKSEN. The span at 123 to 146 shows a compositional bias: polar residues; it reads TSSNHSQESGRETPSSTQASSVNG. The stretch at 160 to 329 forms a coiled coil; it reads THLKSENDKL…RHLKVELKSF (170 aa).

The protein belongs to the Homer family. As to quaternary structure, forms coiled-coil structures that mediate homo- and heteromultimerization. Interacts with NFATC2; interaction is reduced by AKT activation. Interacts with NFATC1 and NFATC4. Interacts with DAGLA (via PPXXF motif); this interaction is required for the cell membrane localization of DAGLA.

The protein localises to the cytoplasm. The protein resides in the cell membrane. Its subcellular location is the postsynaptic density. It localises to the synapse. It is found in the cell projection. The protein localises to the stereocilium. Its function is as follows. Postsynaptic density scaffolding protein. Binds and cross-links cytoplasmic regions of GRM1, GRM5, ITPR1, DNM3, RYR1, RYR2, SHANK1 and SHANK3. By physically linking GRM1 and GRM5 with ER-associated ITPR1 receptors, it aids the coupling of surface receptors to intracellular calcium release. May also couple GRM1 to PI3 kinase through its interaction with AGAP2. Isoforms can be differently regulated and may play an important role in maintaining the plasticity at glutamatergic synapses. Required for normal hearing. Negatively regulates T cell activation by inhibiting the calcineurin-NFAT pathway. Acts by competing with calcineurin/PPP3CA for NFAT protein binding, hence preventing NFAT activation by PPP3CA. This is Homer protein homolog 2 from Homo sapiens (Human).